An 843-amino-acid chain; its full sequence is Complement component C7 (843 aa).

The signal sequence occupies residues 1 to 22; the sequence is MKVISLFILVGFIGEFQSFSSA. In terms of domain architecture, TSP type-1 1 spans 27 to 80; sequence NCQWDFYAPWSECNGCTKTQTRRRSVAVYGQYGGQPCVGNAFETQSCEPTRGCP. Intrachain disulfides connect Cys-28–Cys-63, Cys-39–Cys-73, Cys-42–Cys-79, Cys-85–Cys-96, Cys-91–Cys-109, Cys-103–Cys-119, and Cys-128–Cys-165. A glycan (C-linked (Man) tryptophan) is linked at Trp-36. The LDL-receptor class A domain maps to 83–121; that stretch reads EGCGERFRCFSGQCISKSLVCNGDSDCDEDSADEDRCED. Residues 108–120 are compositionally biased toward acidic residues; sequence DCDEDSADEDRCE. Positions 108–143 are disordered; that stretch reads DCDEDSADEDRCEDSERRPSCDIDKPPPNIELTGNG. The segment covering 121 to 132 has biased composition (basic and acidic residues); that stretch reads DSERRPSCDIDK. In terms of domain architecture, MACPF spans 124–456; the sequence is RRPSCDIDKP…EYLDEFDPCH (333 aa). An N-linked (GlcNAc...) asparagine glycan is attached at Asn-202. The interval 219–240 is disordered; that stretch reads SRKRSFFRSSSSSSRSYTSHTN. Residues 225–234 are compositionally biased toward low complexity; it reads FRSSSSSSRS. 12 cysteine pairs are disulfide-bonded: Cys-337–Cys-353, Cys-433–Cys-560, Cys-455–Cys-505, Cys-457–Cys-473, Cys-460–Cys-475, Cys-477–Cys-486, Cys-512–Cys-545, Cys-523–Cys-535, Cys-571–Cys-613, Cys-599–Cys-626, Cys-631–Cys-673, and Cys-659–Cys-688. The EGF-like domain maps to 457–487; the sequence is CRPCQNGGLATVEGTHCLCHCKPYTFGAACE. Positions 500–549 constitute a TSP type-1 2 domain; that stretch reads DGGWSCWSSWSPCVQGKKTRSRECNNPPPSGGGRSCVGETTESTQCEDEE. Trp-503, Trp-506, and Trp-509 each carry a C-linked (Man) tryptophan; partial glycan. The tract at residues 516 to 538 is disordered; the sequence is KKTRSRECNNPPPSGGGRSCVGE. CCP regions lie at residues 545–615 and 616–693; these read CEDE…RCGE and DLRW…QKEN. Sushi domains are found at residues 569–628 and 629–690; these read EFCP…HCQK and IACV…RCVQ. Factor I module (FIM) stretches follow at residues 695-770 and 771-843; these read LTQA…ASAE and KACG…AETQ. Thr-696 is a glycosylation site (O-linked (GalNAc...) threonine). 9 cysteine pairs are disulfide-bonded: Cys-702–Cys-713, Cys-715–Cys-750, Cys-721–Cys-743, Cys-728–Cys-763, Cys-773–Cys-782, Cys-776–Cys-789, Cys-791–Cys-825, Cys-797–Cys-818, and Cys-805–Cys-838. Residue Asn-754 is glycosylated (N-linked (GlcNAc...) (complex) asparagine).

It belongs to the complement C6/C7/C8/C9 family. In terms of assembly, monomer or dimer; as a C5b-7 complex it can also form multimeric rosettes. Component of the membrane attack complex (MAC), composed of complement C5b, C6, C7, C8A, C8B, C8G and multiple copies of the pore-forming subunit C9. C-, N- and O-glycosylated. O-glycosylated with core 1 or possibly core 8 glycans.

The protein resides in the secreted. It is found in the target cell membrane. Its activity is regulated as follows. Membrane attack complex (MAC) assembly is inhibited by CD59, thereby protecting self-cells from damage during complement activation. MAC assembly is also inhibited by clusterin (CLU) chaperones that inhibit polymerization of C9. Its function is as follows. Component of the membrane attack complex (MAC), a multiprotein complex activated by the complement cascade, which inserts into a target cell membrane and forms a pore, leading to target cell membrane rupture and cell lysis. The MAC is initiated by proteolytic cleavage of C5 into complement C5b in response to the classical, alternative, lectin and GZMK complement pathways. The complement pathways consist in a cascade of proteins that leads to phagocytosis and breakdown of pathogens and signaling that strengthens the adaptive immune system. C7 serves as a membrane anchor. During MAC assembly, associates with C5b and C6 to form the C5b-7 complex, a key lipophilic precursor of the MAC complex, which associates with the outer leaflet and reduces the energy for membrane bending. In Homo sapiens (Human), this protein is Complement component C7.